The primary structure comprises 1465 residues: DNA polymerase III PolC-type (1465 aa).

The region spanning 425-581 (YVVFDVETTG…YDAEATGRLL (157 aa)) is the Exonuclease domain.

The protein belongs to the DNA polymerase type-C family. PolC subfamily.

It is found in the cytoplasm. It catalyses the reaction DNA(n) + a 2'-deoxyribonucleoside 5'-triphosphate = DNA(n+1) + diphosphate. In terms of biological role, required for replicative DNA synthesis. This DNA polymerase also exhibits 3' to 5' exonuclease activity. This is DNA polymerase III PolC-type from Streptococcus mutans serotype c (strain ATCC 700610 / UA159).